We begin with the raw amino-acid sequence, 452 residues long: Phosphoglucosamine mutase (452 aa).

The Phosphoserine intermediate role is filled by Ser101. Mg(2+) is bound by residues Ser101, Asp241, Asp243, and Asp245. Residue Ser101 is modified to Phosphoserine.

It belongs to the phosphohexose mutase family. It depends on Mg(2+) as a cofactor. Activated by phosphorylation.

The enzyme catalyses alpha-D-glucosamine 1-phosphate = D-glucosamine 6-phosphate. Its function is as follows. Catalyzes the conversion of glucosamine-6-phosphate to glucosamine-1-phosphate. This is Phosphoglucosamine mutase from Lactococcus lactis subsp. lactis (strain IL1403) (Streptococcus lactis).